Reading from the N-terminus, the 297-residue chain is MAKVSELYDVTWEEMRDKMRKWREENSRNSEQIVEVGEELINEYASKLGDDIWIIYEQVMIAALDYGRDDLALFCLQELRRQFPGSHRVKRLTGMRFEAMERYDDAIQLYDRILQEDPTNTAARKRKIAIRKAQGKNVEAIRELNEYLEQFVGDQEAWHELAELYINEHDYAKAAFCLEELMMTNPHNHLYCQQYAEVKYTQGGLENLELSRKYFAQALKLNNRNMRALFGLYMSASHIASNPKASAKTKKDNMKYASWAASQINRAYQFAGRSKKETKYSLKAVEDMLETLQITQS.

An N-acetylalanine modification is found at Ala-2. 3 TPR repeats span residues 87–120 (HRVK…DPTN), 155–188 (QEAW…NPHN), and 192–225 (CQQY…NNRN). Position 255 is an N6-acetyllysine (Lys-255).

This sequence belongs to the EMC2 family. Component of the ER membrane protein complex (EMC). Interacts with WNK1 (via amphipathic alpha-helix region); promoting the ER membrane protein complex assembly by preventing EMC2 ubiquitination. Post-translationally, ubiquitinated when soluble in the cytoplasm, leading to its degradation by the proteasome. Interaction with EMC2 prevents its ubiquitination and degradation.

Its subcellular location is the endoplasmic reticulum membrane. Part of the endoplasmic reticulum membrane protein complex (EMC) that enables the energy-independent insertion into endoplasmic reticulum membranes of newly synthesized membrane proteins. Preferentially accommodates proteins with transmembrane domains that are weakly hydrophobic or contain destabilizing features such as charged and aromatic residues. Involved in the cotranslational insertion of multi-pass membrane proteins in which stop-transfer membrane-anchor sequences become ER membrane spanning helices. It is also required for the post-translational insertion of tail-anchored/TA proteins in endoplasmic reticulum membranes. By mediating the proper cotranslational insertion of N-terminal transmembrane domains in an N-exo topology, with translocated N-terminus in the lumen of the ER, controls the topology of multi-pass membrane proteins like the G protein-coupled receptors. By regulating the insertion of various proteins in membranes, it is indirectly involved in many cellular processes. This is ER membrane protein complex subunit 2 from Homo sapiens (Human).